Here is an 813-residue protein sequence, read N- to C-terminus: Leucine--tRNA ligase (813 aa).

The 'HIGH' region motif lies at 40–51 (SYPSGSKLHAGH). A 'KMSKS' region motif is present at residues 572 to 576 (KMSKS). Lys-575 contributes to the ATP binding site.

Belongs to the class-I aminoacyl-tRNA synthetase family.

The protein localises to the cytoplasm. It catalyses the reaction tRNA(Leu) + L-leucine + ATP = L-leucyl-tRNA(Leu) + AMP + diphosphate. This Clostridium botulinum (strain ATCC 19397 / Type A) protein is Leucine--tRNA ligase.